Here is a 274-residue protein sequence, read N- to C-terminus: Nitrogenase iron protein (274 aa).

8-15 (GKGGIGKS) contacts ATP. Residue Cys-94 coordinates [4Fe-4S] cluster. An ADP-ribosylarginine; by dinitrogenase reductase ADP-ribosyltransferase modification is found at Arg-97. Cys-131 is a [4Fe-4S] cluster binding site.

It belongs to the NifH/BchL/ChlL family. In terms of assembly, homodimer. [4Fe-4S] cluster serves as cofactor. In terms of processing, the reversible ADP-ribosylation of Arg-97 inactivates the nitrogenase reductase and regulates nitrogenase activity.

It carries out the reaction N2 + 8 reduced [2Fe-2S]-[ferredoxin] + 16 ATP + 16 H2O = H2 + 8 oxidized [2Fe-2S]-[ferredoxin] + 2 NH4(+) + 16 ADP + 16 phosphate + 6 H(+). In terms of biological role, the key enzymatic reactions in nitrogen fixation are catalyzed by the nitrogenase complex, which has 2 components: the iron protein and the molybdenum-iron protein. The sequence is that of Nitrogenase iron protein from Chlorobium luteolum (strain DSM 273 / BCRC 81028 / 2530) (Pelodictyon luteolum).